Here is a 78-residue protein sequence, read N- to C-terminus: Delta-conotoxin-like Ai6.1 (78 aa).

The first 22 residues, 1-22, serve as a signal peptide directing secretion; that stretch reads MKLTCVMIVAVLFLTAWTFATA. Positions 23 to 49 are excised as a propeptide; it reads DDPRNGLGNLFSNAHHEMKNPEASKLN. Disulfide bonds link Cys-53–Cys-68, Cys-60–Cys-72, and Cys-67–Cys-77.

This sequence belongs to the conotoxin O1 superfamily. As to expression, expressed by the venom duct.

It localises to the secreted. Its function is as follows. Delta-conotoxins bind to site 6 of voltage-gated sodium channels (Nav) and inhibit the inactivation process. This is Delta-conotoxin-like Ai6.1 from Conus ammiralis (Admiral cone).